Consider the following 337-residue polypeptide: Glyceraldehyde-3-phosphate dehydrogenase (337 aa).

Residues 13–14 (RI), Asp35, and Arg80 each bind NAD(+). D-glyceraldehyde 3-phosphate is bound by residues 150–152 (SCT), Thr181, 210–211 (TG), and Arg233. Cys151 functions as the Nucleophile in the catalytic mechanism. Asn315 provides a ligand contact to NAD(+).

It belongs to the glyceraldehyde-3-phosphate dehydrogenase family. Homotetramer.

Its subcellular location is the cytoplasm. The enzyme catalyses D-glyceraldehyde 3-phosphate + phosphate + NAD(+) = (2R)-3-phospho-glyceroyl phosphate + NADH + H(+). Its pathway is carbohydrate degradation; glycolysis; pyruvate from D-glyceraldehyde 3-phosphate: step 1/5. The polypeptide is Glyceraldehyde-3-phosphate dehydrogenase (GPDA) (Colletotrichum lindemuthianum (Bean anthracnose fungus)).